The sequence spans 485 residues: MPRFVDRVVIHARAGNGGNGCASVHREKFKPLGGPDGGNGGRGGSIVLVVDPQVHTLLDFHFHPHVVAPSGKQGAGSNRDGAAGADLEVRVPDGTVVLDEEGRVLADLVGAGTRFEAAAGGRGGLGNAALASRSRRAPGFALLGEKGQVRELTLELKTVADVGLIGFPSAGKSSLVSTISAAKPKIADYPFTTLVPNLGVVSAGDHTFTVADVPGLIPGASEGRGLGLEFLRHIERCAVLVHVVDCATMEPGRDPISDIEALEAELAAYRPTLQGDSTLGDLAERPRAVVLNKIDVPDARELADFVRDEVAERFGWPVFEVSTVAREGLRPFIFALWDMVRTYREAQPPVVPRRPIIRPIAVDETGFSVHPDGQGGFVVRGTRPERWINQTDFDNDEAVGYLGDRLARLGVEEELLRLGARPGCAVTIGDMTFDWEPQTPAGVDVQMSGRGTDTRLEQTDRVSAAERKIARRERRQSTDEPGGEE.

Residues Pro-2–Val-159 form the Obg domain. Residues Ala-160–Arg-341 enclose the OBG-type G domain. Residues Gly-166–Ser-173, Phe-191–Val-195, Asp-212–Gly-215, Asn-292–Asp-295, and Ser-322–Val-324 each bind GTP. Positions 173 and 193 each coordinate Mg(2+). Residues Pro-359 to Pro-437 enclose the OCT domain. The tract at residues Thr-439 to Glu-485 is disordered. Residues Thr-452–Lys-468 are compositionally biased toward basic and acidic residues.

The protein belongs to the TRAFAC class OBG-HflX-like GTPase superfamily. OBG GTPase family. As to quaternary structure, monomer. Requires Mg(2+) as cofactor.

Its subcellular location is the cytoplasm. Its function is as follows. An essential GTPase which binds GTP, GDP and possibly (p)ppGpp with moderate affinity, with high nucleotide exchange rates and a fairly low GTP hydrolysis rate. Plays a role in control of the cell cycle, stress response, ribosome biogenesis and in those bacteria that undergo differentiation, in morphogenesis control. The protein is GTPase Obg of Mycobacterium sp. (strain MCS).